The following is a 53-amino-acid chain: Metallothionein (53 aa).

The propeptide occupies 1–6 (MRVIRM). Cu(+) contacts are provided by cysteine 17, histidine 19, cysteine 22, cysteine 24, cysteine 32, histidine 33, cysteine 34, cysteine 43, and cysteine 45.

Belongs to the metallothionein superfamily.

Its function is as follows. Metallothioneins are small proteins that have a high content of cysteine residues which allow them to bind heavy metal ions through clusters of thiolate bonds. MymT binds up to seven ions of Cu(+), with a preference for four to six Cu(+) ions, in a solvent-shielded core. MymT protects M.tuberculosis from copper toxicity. This Mycobacterium tuberculosis (strain CDC 1551 / Oshkosh) protein is Metallothionein (mymT).